A 132-amino-acid chain; its full sequence is Transcriptional regulator MraZ (132 aa).

SpoVT-AbrB domains follow at residues 5 to 47 (TYEH…SKDD) and 76 to 119 (TVEI…SKNK).

This sequence belongs to the MraZ family. Forms oligomers.

Its subcellular location is the cytoplasm. The protein resides in the nucleoid. The chain is Transcriptional regulator MraZ from Mycoplasma capricolum subsp. capricolum (strain California kid / ATCC 27343 / NCTC 10154).